A 472-amino-acid polypeptide reads, in one-letter code: Dihydrolipoyl dehydrogenase 2 (472 aa).

Residues 39–47, K56, and A118 each bind FAD; that span reads ERDAYGGTC. C47 and C52 are joined by a disulfide. Residues 186-190, E209, and 275-278 contribute to the NAD(+) site; these read GAGYI and AVGR. Positions 318 and 326 each coordinate FAD. H450 acts as the Proton acceptor in catalysis.

Belongs to the class-I pyridine nucleotide-disulfide oxidoreductase family. As to quaternary structure, homodimer. FAD serves as cofactor.

It localises to the cytoplasm. It catalyses the reaction N(6)-[(R)-dihydrolipoyl]-L-lysyl-[protein] + NAD(+) = N(6)-[(R)-lipoyl]-L-lysyl-[protein] + NADH + H(+). The polypeptide is Dihydrolipoyl dehydrogenase 2 (lpdA2) (Haloarcula marismortui (strain ATCC 43049 / DSM 3752 / JCM 8966 / VKM B-1809) (Halobacterium marismortui)).